The sequence spans 816 residues: Stemod-13(17)-ene synthase (816 aa).

Residues 1-10 (MMLLSSSYSG) show a composition bias toward polar residues. A disordered region spans residues 1-24 (MMLLSSSYSGGQFPGVSPLGTRPK). Residues aspartate 553, aspartate 557, asparagine 698, threonine 702, and glutamate 706 each coordinate Mg(2+). Positions 553–557 (DDFFD) match the DDXXD motif motif.

It belongs to the terpene synthase family. Requires Mg(2+) as cofactor.

The enzyme catalyses 9alpha-copalyl diphosphate = stemod-13(17)-ene + diphosphate. Catalyzes the conversion of syn-copalyl diphosphate to stemodene. The sequence is that of Stemod-13(17)-ene synthase (KSL11) from Oryza sativa subsp. indica (Rice).